The chain runs to 433 residues: Adenosylhomocysteinase A (433 aa).

Residues T57, D132, E157, K187, and D191 each contribute to the substrate site. Residues 184 to 351 (SVTKSKFDNL…EGRLVNLGCA (168 aa)) form an NAD binding region.

The protein belongs to the adenosylhomocysteinase family. As to quaternary structure, homotetramer. NAD(+) serves as cofactor.

The protein resides in the cytoplasm. It catalyses the reaction S-adenosyl-L-homocysteine + H2O = L-homocysteine + adenosine. The protein operates within amino-acid biosynthesis; L-homocysteine biosynthesis; L-homocysteine from S-adenosyl-L-homocysteine: step 1/1. In terms of biological role, catalyzes the hydrolysis of S-adenosyl-L-homocysteine to form adenosine and homocysteine. Binds copper ions. This chain is Adenosylhomocysteinase A (ahcy-a), found in Xenopus laevis (African clawed frog).